The sequence spans 120 residues: Large ribosomal subunit protein bL20 (120 aa).

The protein belongs to the bacterial ribosomal protein bL20 family.

In terms of biological role, binds directly to 23S ribosomal RNA and is necessary for the in vitro assembly process of the 50S ribosomal subunit. It is not involved in the protein synthesizing functions of that subunit. This is Large ribosomal subunit protein bL20 from Cereibacter sphaeroides (strain ATCC 17025 / ATH 2.4.3) (Rhodobacter sphaeroides).